A 386-amino-acid chain; its full sequence is Formate-dependent phosphoribosylglycinamide formyltransferase (386 aa).

N(1)-(5-phospho-beta-D-ribosyl)glycinamide contacts are provided by residues glutamate 15–leucine 16 and glutamate 75. ATP-binding positions include arginine 107, lysine 148, serine 153–glutamine 158, glutamate 188–isoleucine 191, and glutamate 196. Residues alanine 112–valine 301 enclose the ATP-grasp domain. Glutamate 260 and glutamate 272 together coordinate Mg(2+). Residues aspartate 279, lysine 349, and arginine 356–arginine 357 each bind N(1)-(5-phospho-beta-D-ribosyl)glycinamide.

The protein belongs to the PurK/PurT family. Homodimer.

It catalyses the reaction N(1)-(5-phospho-beta-D-ribosyl)glycinamide + formate + ATP = N(2)-formyl-N(1)-(5-phospho-beta-D-ribosyl)glycinamide + ADP + phosphate + H(+). It functions in the pathway purine metabolism; IMP biosynthesis via de novo pathway; N(2)-formyl-N(1)-(5-phospho-D-ribosyl)glycinamide from N(1)-(5-phospho-D-ribosyl)glycinamide (formate route): step 1/1. Its function is as follows. Involved in the de novo purine biosynthesis. Catalyzes the transfer of formate to 5-phospho-ribosyl-glycinamide (GAR), producing 5-phospho-ribosyl-N-formylglycinamide (FGAR). Formate is provided by PurU via hydrolysis of 10-formyl-tetrahydrofolate. This is Formate-dependent phosphoribosylglycinamide formyltransferase from Francisella tularensis subsp. tularensis (strain SCHU S4 / Schu 4).